A 195-amino-acid chain; its full sequence is MIDNNVKNNIDESTLQNEKIEKEELLESVSTVDNVIDPKNDQIIKLKIQLAQLQEHERNTVLRLTAEIENIRRRNTQEIEKIHKFGLERFIFELLPVIDNLERTMSISDNSNTLLSAIIEGIELTLKSFLDTVHKFGLKSIYEINVPFNPEIHQAISIIESEDHKPNQVLTMIQKGYILNGRLIRPAMVTVSQSK.

This sequence belongs to the GrpE family. Homodimer.

The protein resides in the cytoplasm. Its function is as follows. Participates actively in the response to hyperosmotic and heat shock by preventing the aggregation of stress-denatured proteins, in association with DnaK and GrpE. It is the nucleotide exchange factor for DnaK and may function as a thermosensor. Unfolded proteins bind initially to DnaJ; upon interaction with the DnaJ-bound protein, DnaK hydrolyzes its bound ATP, resulting in the formation of a stable complex. GrpE releases ADP from DnaK; ATP binding to DnaK triggers the release of the substrate protein, thus completing the reaction cycle. Several rounds of ATP-dependent interactions between DnaJ, DnaK and GrpE are required for fully efficient folding. The sequence is that of Protein GrpE from Blochmanniella pennsylvanica (strain BPEN).